Here is a 62-residue protein sequence, read N- to C-terminus: DNA-directed RNA polymerase subunit Rpo10 (62 aa).

Zn(2+)-binding residues include Cys-6, Cys-9, Cys-43, and Cys-44.

It belongs to the archaeal Rpo10/eukaryotic RPB10 RNA polymerase subunit family. In terms of assembly, part of the RNA polymerase complex. The cofactor is Zn(2+).

The protein resides in the cytoplasm. The catalysed reaction is RNA(n) + a ribonucleoside 5'-triphosphate = RNA(n+1) + diphosphate. In terms of biological role, DNA-dependent RNA polymerase (RNAP) catalyzes the transcription of DNA into RNA using the four ribonucleoside triphosphates as substrates. The sequence is that of DNA-directed RNA polymerase subunit Rpo10 from Methanococcoides burtonii (strain DSM 6242 / NBRC 107633 / OCM 468 / ACE-M).